Reading from the N-terminus, the 392-residue chain is NAD(P)H-quinone oxidoreductase subunit H (392 aa).

Belongs to the complex I 49 kDa subunit family. In terms of assembly, NDH-1 can be composed of about 15 different subunits; different subcomplexes with different compositions have been identified which probably have different functions.

The protein localises to the cellular thylakoid membrane. The catalysed reaction is a plastoquinone + NADH + (n+1) H(+)(in) = a plastoquinol + NAD(+) + n H(+)(out). It catalyses the reaction a plastoquinone + NADPH + (n+1) H(+)(in) = a plastoquinol + NADP(+) + n H(+)(out). Its function is as follows. NDH-1 shuttles electrons from an unknown electron donor, via FMN and iron-sulfur (Fe-S) centers, to quinones in the respiratory and/or the photosynthetic chain. The immediate electron acceptor for the enzyme in this species is believed to be plastoquinone. Couples the redox reaction to proton translocation, and thus conserves the redox energy in a proton gradient. Cyanobacterial NDH-1 also plays a role in inorganic carbon-concentration. The polypeptide is NAD(P)H-quinone oxidoreductase subunit H (Synechococcus sp. (strain JA-2-3B'a(2-13)) (Cyanobacteria bacterium Yellowstone B-Prime)).